A 377-amino-acid chain; its full sequence is MEVAQPKDLKEDFVLAKRRHAELVRQKRIFNARNRIIGGDTTAWDAQVCDQNIKAATEKARDEAFAAEMRQNDKIACLSENRERRDRKNLCKAINDFQQSFQRPETRREFDLSDPLALKKDRPARQSDYDARNTISGMQKFMGEDLNFHLRKKFQEEQNREWSLQQQKEQMIGRENQKCAEDLYLKTRLQFDETAKHLQNLETATRKAVCATVKEFNKNQALESAEKKIQERKQEQEDNLAEISNMLRGDLLSENPQQAASSFGPHRVVPDRWKGMSQEQLEEIRLVQRQQVQEKLRLQEEERQRDMDWDRRRIQKARATLLFEQQQQRLQRGLRRALDCSNLSLAREQLLQKKHMKELCTNHATEDYFTQFNTGSR.

Coiled-coil stretches lie at residues 217–250 and 282–308; these read NKNQALESAEKKIQERKQEQEDNLAEISNMLRGD and EEIRLVQRQQVQEKLRLQEEERQRDMD.

This sequence belongs to the RIB43A family. As to quaternary structure, microtubule inner protein component of sperm flagellar doublet microtubules. Expressed in trachea multiciliated cells.

It localises to the cytoplasm. Its subcellular location is the cytoskeleton. The protein localises to the cilium axoneme. It is found in the flagellum axoneme. Its function is as follows. Microtubule inner protein (MIP) part of the dynein-decorated doublet microtubules (DMTs) in cilia axoneme, which is required for motile cilia beating. The chain is RIB43A-like with coiled-coils protein 2 from Bos taurus (Bovine).